A 639-amino-acid polypeptide reads, in one-letter code: DNA gyrase subunit B (639 aa).

The segment covering 392–402 (QAEELTRRKSA) has biased composition (basic and acidic residues). Residues 392 to 417 (QAEELTRRKSALESTSLPGKLADCQS) are disordered. The 115-residue stretch at 423 to 537 (SELFIVEGDS…AGYVYAAQPP (115 aa)) folds into the Toprim domain. Positions 429, 502, and 504 each coordinate Mg(2+).

It belongs to the type II topoisomerase GyrB family. As to quaternary structure, heterotetramer, composed of two GyrA and two GyrB chains. In the heterotetramer, GyrA contains the active site tyrosine that forms a transient covalent intermediate with DNA, while GyrB binds cofactors and catalyzes ATP hydrolysis. Requires Mg(2+) as cofactor. The cofactor is Mn(2+). It depends on Ca(2+) as a cofactor.

Its subcellular location is the cytoplasm. It catalyses the reaction ATP-dependent breakage, passage and rejoining of double-stranded DNA.. Its function is as follows. A type II topoisomerase that negatively supercoils closed circular double-stranded (ds) DNA in an ATP-dependent manner to modulate DNA topology and maintain chromosomes in an underwound state. Negative supercoiling favors strand separation, and DNA replication, transcription, recombination and repair, all of which involve strand separation. Also able to catalyze the interconversion of other topological isomers of dsDNA rings, including catenanes and knotted rings. Type II topoisomerases break and join 2 DNA strands simultaneously in an ATP-dependent manner. This Haloferax lucentense (strain DSM 14919 / JCM 9276 / NCIMB 13854 / Aa 2.2) (Haloferax alicantei) protein is DNA gyrase subunit B.